The chain runs to 513 residues: uncharacterized protein (513 aa).

A run of 5 helical transmembrane segments spans residues 262-282 (FAIF…FWQL), 304-324 (YMFL…ITYH), 341-361 (EPIP…FEAL), 382-402 (LVIG…VIIV), and 429-449 (MFLA…ILVL). The segment at 489 to 513 (PGTYSRGNGQKGAKREDPKDEENNI) is disordered. Positions 501–513 (AKREDPKDEENNI) are enriched in basic and acidic residues.

The protein belongs to the GerABKA family.

Its subcellular location is the cell membrane. This is an uncharacterized protein from Bacillus subtilis (strain 168).